The following is a 739-amino-acid chain: Catalase-peroxidase (739 aa).

The signal sequence occupies residues 1–23 (MLKKIVTALGMSGMLLAANSAIA). The tryptophyl-tyrosyl-methioninium (Trp-Tyr) (with M-247) cross-link spans 100 to 221 (WHDAGTYRLA…YAATQMGLIY (122 aa)). The active-site Proton acceptor is H101. Residues 221–247 (YVNPEGPDGKPDIKGAASEIRQAFRAM) constitute a cross-link (tryptophyl-tyrosyl-methioninium (Tyr-Met) (with W-100)). H262 is a heme b binding site.

This sequence belongs to the peroxidase family. Peroxidase/catalase subfamily. In terms of assembly, homodimer or homotetramer. Heme b is required as a cofactor. Post-translationally, formation of the three residue Trp-Tyr-Met cross-link is important for the catalase, but not the peroxidase activity of the enzyme.

The enzyme catalyses H2O2 + AH2 = A + 2 H2O. The catalysed reaction is 2 H2O2 = O2 + 2 H2O. Functionally, bifunctional enzyme with both catalase and broad-spectrum peroxidase activity. This Francisella philomiragia subsp. philomiragia (strain ATCC 25017 / CCUG 19701 / FSC 153 / O#319-036) protein is Catalase-peroxidase.